The sequence spans 242 residues: Sec-independent protein translocase protein TatCd (242 aa).

The next 3 membrane-spanning stretches (helical) occupy residues 19-39 (IIVT…FVQD), 60-80 (ILWV…IPVA), and 107-127 (LFAL…PIVL). Residues 128 to 149 (SFLTHLSSGHFETMFTADRYFR) are interaction with TatAd. Residues 150 to 170 (FMVNLSLPFGFLFEMPLVVMF) form a helical membrane-spanning segment. Residues 171-187 (LTRLGILNPYRLAKARK) form an interaction with TatAd region. Transmembrane regions (helical) follow at residues 188-208 (LSYF…FISD) and 209-229 (FLVM…SAFV).

This sequence belongs to the TatC family. As to quaternary structure, forms a complex with TatAd. Two types of complexes exist: one composed of TatAd and TatCd, and another composed only of TatAd.

The protein localises to the cell membrane. Functionally, part of the twin-arginine translocation (Tat) system that transports large folded proteins containing a characteristic twin-arginine motif in their signal peptide across membranes. Required for PhoD secretion. TatCd promotes membrane localization of TatAd via domain specific interactions. TatCd is required for stabile production of TatAd as well as for its maintenance. This Bacillus subtilis (strain 168) protein is Sec-independent protein translocase protein TatCd.